The sequence spans 49 residues: Large ribosomal subunit protein bL33B (49 aa).

This sequence belongs to the bacterial ribosomal protein bL33 family.

The protein is Large ribosomal subunit protein bL33B of Lacticaseibacillus paracasei (strain ATCC 334 / BCRC 17002 / CCUG 31169 / CIP 107868 / KCTC 3260 / NRRL B-441) (Lactobacillus paracasei).